The sequence spans 206 residues: MDSAGQDINLNSPNKGLLSDSMTDVPVDTGVAARTPAVEGLTEAEEEELRAELTKVEEEIVTLRQVLAAKERHCGELKRRLGLSTLGELKQNLSRSWHDVQVSSAYVKTSEKLGEWNEKVTQSDLYKKTQETLSQAGQKTSAALSTVGSAISRKLGDMRNSATFKSFEDRVGTIKSKVVGDRENGSDNLPSSAGSGDKPLSDPAPF.

Methionine 1 is subject to N-acetylmethionine. A compositionally biased stretch (polar residues) spans 1–14; it reads MDSAGQDINLNSPN. The disordered stretch occupies residues 1-24; that stretch reads MDSAGQDINLNSPNKGLLSDSMTD. 4 positions are modified to phosphoserine: serine 3, serine 12, serine 19, and serine 21. Residues 38–82 adopt a coiled-coil conformation; that stretch reads VEGLTEAEEEELRAELTKVEEEIVTLRQVLAAKERHCGELKRRLG. Phosphoserine is present on residues serine 96, serine 149, and serine 161. Position 163 is a phosphothreonine (threonine 163). Phosphoserine is present on serine 166. Threonine 173 carries the post-translational modification Phosphothreonine. Basic and acidic residues predominate over residues 175-185; the sequence is KSKVVGDRENG. Positions 175-206 are disordered; that stretch reads KSKVVGDRENGSDNLPSSAGSGDKPLSDPAPF. 2 positions are modified to phosphoserine: serine 192 and serine 195.

Belongs to the TPD52 family. In terms of assembly, forms a homodimer or heterodimer with other members of the family. Interacts with MAL2.

In Homo sapiens (Human), this protein is Tumor protein D54 (TPD52L2).